The following is a 494-amino-acid chain: Membrane-bound lytic murein transglycosylase F 1 (494 aa).

Residues 1-24 form the signal peptide; that stretch reads MRIMAVRLVAGAITLALMAYAWLA. The non-LT domain stretch occupies residues 25–270; it reads WERARDPEPI…TLLEEHFGHL (246 aa). Positions 271–494 are LT domain; that stretch reads GRFDYVGFRA…APLPADPPAD (224 aa). Residue E317 is part of the active site. Positions 464 to 494 are disordered; sequence QVPAGEALGEPPLPTPPAPPGAPLPADPPAD. Over residues 474–494 the composition is skewed to pro residues; the sequence is PPLPTPPAPPGAPLPADPPAD.

It in the N-terminal section; belongs to the bacterial solute-binding protein 3 family. This sequence in the C-terminal section; belongs to the transglycosylase Slt family.

The protein resides in the cell outer membrane. It carries out the reaction Exolytic cleavage of the (1-&gt;4)-beta-glycosidic linkage between N-acetylmuramic acid (MurNAc) and N-acetylglucosamine (GlcNAc) residues in peptidoglycan, from either the reducing or the non-reducing ends of the peptidoglycan chains, with concomitant formation of a 1,6-anhydrobond in the MurNAc residue.. Murein-degrading enzyme that degrades murein glycan strands and insoluble, high-molecular weight murein sacculi, with the concomitant formation of a 1,6-anhydromuramoyl product. Lytic transglycosylases (LTs) play an integral role in the metabolism of the peptidoglycan (PG) sacculus. Their lytic action creates space within the PG sacculus to allow for its expansion as well as for the insertion of various structures such as secretion systems and flagella. In Alkalilimnicola ehrlichii (strain ATCC BAA-1101 / DSM 17681 / MLHE-1), this protein is Membrane-bound lytic murein transglycosylase F 1.